We begin with the raw amino-acid sequence, 265 residues long: Zwei Ig domain protein zig-1 (265 aa).

The first 17 residues, 1–17 (MKNLLLITFFVVSTVTA), serve as a signal peptide directing secretion. Over 18-232 (LGGRGSKSAL…KMVDVRSEFQ (215 aa)) the chain is Extracellular. Ig-like C2-type domains follow at residues 41 to 108 (HATD…TPHG) and 120 to 220 (PVVH…MLLV). Residues N83 and N193 are each glycosylated (N-linked (GlcNAc...) asparagine). C155 and C202 form a disulfide bridge. Residues 233–253 (WVYPLAVILITIFLLVVIIVF) traverse the membrane as a helical segment. Over 254-265 (CEWRNKKSTSKA) the chain is Cytoplasmic.

As to expression, expressed in neurons and body wall muscles.

It localises to the cell membrane. Its function is as follows. Probably not involved in maintaining the position of ASI and ASH head neuron cell bodies and ventral nerve cord axons of PVQ, PVP, RMEV, AVK and HSN neurons. The polypeptide is Zwei Ig domain protein zig-1 (Caenorhabditis elegans).